Reading from the N-terminus, the 200-residue chain is Peptidyl-tRNA hydrolase (200 aa).

Tyr23 serves as a coordination point for tRNA. His28 functions as the Proton acceptor in the catalytic mechanism. Residues Phe79, Asn81, and Asn127 each contribute to the tRNA site.

It belongs to the PTH family. In terms of assembly, monomer.

It localises to the cytoplasm. The catalysed reaction is an N-acyl-L-alpha-aminoacyl-tRNA + H2O = an N-acyl-L-amino acid + a tRNA + H(+). In terms of biological role, hydrolyzes ribosome-free peptidyl-tRNAs (with 1 or more amino acids incorporated), which drop off the ribosome during protein synthesis, or as a result of ribosome stalling. Catalyzes the release of premature peptidyl moieties from peptidyl-tRNA molecules trapped in stalled 50S ribosomal subunits, and thus maintains levels of free tRNAs and 50S ribosomes. The chain is Peptidyl-tRNA hydrolase from Streptomyces coelicolor (strain ATCC BAA-471 / A3(2) / M145).